The following is a 185-amino-acid chain: Ribosome-recycling factor (185 aa).

It belongs to the RRF family.

The protein localises to the cytoplasm. Its function is as follows. Responsible for the release of ribosomes from messenger RNA at the termination of protein biosynthesis. May increase the efficiency of translation by recycling ribosomes from one round of translation to another. In Beutenbergia cavernae (strain ATCC BAA-8 / DSM 12333 / CCUG 43141 / JCM 11478 / NBRC 16432 / NCIMB 13614 / HKI 0122), this protein is Ribosome-recycling factor.